Consider the following 145-residue polypeptide: Large ribosomal subunit protein uL16 (145 aa).

The protein belongs to the universal ribosomal protein uL16 family. Part of the 50S ribosomal subunit.

Its function is as follows. Binds 23S rRNA and is also seen to make contacts with the A and possibly P site tRNAs. The sequence is that of Large ribosomal subunit protein uL16 from Lactobacillus gasseri (strain ATCC 33323 / DSM 20243 / BCRC 14619 / CIP 102991 / JCM 1131 / KCTC 3163 / NCIMB 11718 / NCTC 13722 / AM63).